A 252-amino-acid chain; its full sequence is Hydroxyacylglutathione hydrolase (252 aa).

Residues His-54, His-56, Asp-58, His-59, His-111, Asp-128, and His-166 each coordinate Zn(2+).

The protein belongs to the metallo-beta-lactamase superfamily. Glyoxalase II family. In terms of assembly, monomer. Zn(2+) is required as a cofactor.

The enzyme catalyses an S-(2-hydroxyacyl)glutathione + H2O = a 2-hydroxy carboxylate + glutathione + H(+). It participates in secondary metabolite metabolism; methylglyoxal degradation; (R)-lactate from methylglyoxal: step 2/2. Functionally, thiolesterase that catalyzes the hydrolysis of S-D-lactoyl-glutathione to form glutathione and D-lactic acid. This is Hydroxyacylglutathione hydrolase from Aliivibrio salmonicida (strain LFI1238) (Vibrio salmonicida (strain LFI1238)).